Consider the following 70-residue polypeptide: Large ribosomal subunit protein bL31 (70 aa).

Cysteine 16, cysteine 18, cysteine 37, and cysteine 40 together coordinate Zn(2+). Residues 48–70 (QRQASSGGRVDKFNKRFGALGSK) are disordered.

Belongs to the bacterial ribosomal protein bL31 family. Type A subfamily. In terms of assembly, part of the 50S ribosomal subunit. The cofactor is Zn(2+).

Its function is as follows. Binds the 23S rRNA. This is Large ribosomal subunit protein bL31 from Photobacterium profundum (strain SS9).